A 219-amino-acid polypeptide reads, in one-letter code: Thiamine-phosphate synthase (219 aa).

4-amino-2-methyl-5-(diphosphooxymethyl)pyrimidine contacts are provided by residues 44 to 48 (QFREK) and asparagine 79. Residues aspartate 80 and aspartate 99 each coordinate Mg(2+). 4-amino-2-methyl-5-(diphosphooxymethyl)pyrimidine is bound at residue serine 117. 143–145 (TST) serves as a coordination point for 2-[(2R,5Z)-2-carboxy-4-methylthiazol-5(2H)-ylidene]ethyl phosphate. Lysine 146 serves as a coordination point for 4-amino-2-methyl-5-(diphosphooxymethyl)pyrimidine. 2-[(2R,5Z)-2-carboxy-4-methylthiazol-5(2H)-ylidene]ethyl phosphate-binding positions include glycine 175 and 195 to 196 (IS).

This sequence belongs to the thiamine-phosphate synthase family. Mg(2+) serves as cofactor.

It carries out the reaction 2-[(2R,5Z)-2-carboxy-4-methylthiazol-5(2H)-ylidene]ethyl phosphate + 4-amino-2-methyl-5-(diphosphooxymethyl)pyrimidine + 2 H(+) = thiamine phosphate + CO2 + diphosphate. The catalysed reaction is 2-(2-carboxy-4-methylthiazol-5-yl)ethyl phosphate + 4-amino-2-methyl-5-(diphosphooxymethyl)pyrimidine + 2 H(+) = thiamine phosphate + CO2 + diphosphate. It catalyses the reaction 4-methyl-5-(2-phosphooxyethyl)-thiazole + 4-amino-2-methyl-5-(diphosphooxymethyl)pyrimidine + H(+) = thiamine phosphate + diphosphate. Its pathway is cofactor biosynthesis; thiamine diphosphate biosynthesis; thiamine phosphate from 4-amino-2-methyl-5-diphosphomethylpyrimidine and 4-methyl-5-(2-phosphoethyl)-thiazole: step 1/1. Condenses 4-methyl-5-(beta-hydroxyethyl)thiazole monophosphate (THZ-P) and 2-methyl-4-amino-5-hydroxymethyl pyrimidine pyrophosphate (HMP-PP) to form thiamine monophosphate (TMP). This Bacillus cereus (strain AH187) protein is Thiamine-phosphate synthase.